We begin with the raw amino-acid sequence, 64 residues long: Large ribosomal subunit protein uL29 (64 aa).

Belongs to the universal ribosomal protein uL29 family.

This chain is Large ribosomal subunit protein uL29, found in Teredinibacter turnerae (strain ATCC 39867 / T7901).